Here is a 323-residue protein sequence, read N- to C-terminus: Phosphomevalonate kinase (323 aa).

Belongs to the GHMP kinase family. In terms of assembly, homodimer. Mg(2+) is required as a cofactor.

The enzyme catalyses (R)-5-phosphomevalonate + ATP = (R)-5-diphosphomevalonate + ADP. Its pathway is isoprenoid biosynthesis; isopentenyl diphosphate biosynthesis via mevalonate pathway; isopentenyl diphosphate from (R)-mevalonate: step 2/3. Catalyzes the phosphorylation of (R)-mevalonate 5-phosphate (MVAP) to (R)-mevalonate 5-diphosphate (MVAPP). Functions in the mevalonate (MVA) pathway leading to isopentenyl diphosphate (IPP), a key precursor for the biosynthesis of isoprenoid compounds such as archaeal membrane lipids. The chain is Phosphomevalonate kinase from Saccharolobus solfataricus (strain ATCC 35092 / DSM 1617 / JCM 11322 / P2) (Sulfolobus solfataricus).